The chain runs to 152 residues: CASP-like protein 5B3 (152 aa).

Residues 1-21 (MIDIPGTPGTLTGLVLRISQC) lie on the Cytoplasmic side of the membrane. Helical transmembrane passes span 22-42 (VFAA…SFTA) and 43-63 (FCYL…LAIL). At 64-77 (DTFALVRKKTLLSP) the chain is on the extracellular side. Residues 78-98 (VLVSLFVVGDWVTSTLSLAGA) form a helical membrane-spanning segment. Topologically, residues 99–127 (SSSAGITVLYFGDLGSCSFEAECWKYQLS) are cytoplasmic. A helical transmembrane segment spans residues 128–148 (VALAFLCWITIAVSSLTTLWL). Residues 149 to 152 (LASA) are Extracellular-facing.

Belongs to the Casparian strip membrane proteins (CASP) family. In terms of assembly, homodimer and heterodimers. In terms of tissue distribution, expressed in the stele of the root and in leaves.

It localises to the cell membrane. The chain is CASP-like protein 5B3 from Arabidopsis thaliana (Mouse-ear cress).